The following is a 62-amino-acid chain: Protein sigN176 (62 aa).

The polypeptide is Protein sigN176 (Dictyostelium discoideum (Social amoeba)).